Here is a 616-residue protein sequence, read N- to C-terminus: Zinc metalloproteinase-disintegrin-like VLAIP-A (616 aa).

Positions 1-20 (MMQVLLVTISLAVFPYQGSS) are cleaved as a signal peptide. The propeptide occupies 21 to 194 (IILESGNVND…KASQLNLTPE (174 aa)). Residue Gln-195 is modified to Pyrrolidone carboxylic acid. The 197-residue stretch at 203-399 (KYIKLVIVAD…KMPQCILNKP (197 aa)) folds into the Peptidase M12B domain. Disulfide bonds link Cys-314-Cys-394, Cys-354-Cys-378, and Cys-356-Cys-361. His-339 provides a ligand contact to Zn(2+). Glu-340 is a catalytic residue. Residues His-343 and His-349 each contribute to the Zn(2+) site. N-linked (GlcNAc...) asparagine glycosylation occurs at Asn-377. The Disintegrin domain occupies 407–493 (PAVCGNYLVE…ECPTDQFQRN (87 aa)). Val-409, Asn-412, Leu-414, Glu-416, Glu-419, and Asp-422 together coordinate Ca(2+). 14 cysteine pairs are disulfide-bonded: Cys-410–Cys-439, Cys-421–Cys-434, Cys-423–Cys-429, Cys-433–Cys-456, Cys-447–Cys-453, Cys-452–Cys-478, Cys-465–Cys-485, Cys-472–Cys-504, Cys-497–Cys-509, Cys-516–Cys-566, Cys-531–Cys-577, Cys-544–Cys-554, Cys-561–Cys-603, and Cys-597–Cys-609. The short motif at 471–473 (ECD) is the D/ECD-tripeptide element.

Belongs to the venom metalloproteinase (M12B) family. P-III subfamily. P-IIIc sub-subfamily. Heterodimer; disulfide-linked. Requires Zn(2+) as cofactor. Post-translationally, the N-terminus is blocked. In terms of tissue distribution, expressed by the venom gland.

Its subcellular location is the secreted. Inhibited by EDTA or 1,10-phenanthroline. Not inhibited by PMSF. In terms of biological role, snake venom zinc metalloprotease that hydrolyzes the alpha-chain (FGA) and more slowly the beta-chain (FGB) of fibrinogen, without affecting the gamma-chain. Cleaves alpha-chain of fibrinogen at '432-Lys-|-Leu-433' and '535-Pro-|-Met-536' bonds. Induces apoptosis in vascular endothelial cells and inhibits endothelial cell adhesion to extracellular matrix proteins such as fibrinogen, fibronectin, vitronectin, collagen I, and collagen IV. Also hydrolyzes azocasein, and insulin B-chain (at the '38-Ala-|-Leu-39' bond). In Macrovipera lebetinus (Levantine viper), this protein is Zinc metalloproteinase-disintegrin-like VLAIP-A.